The sequence spans 129 residues: Glycine cleavage system H protein (129 aa).

A Lipoyl-binding domain is found at 24-106 (LVRVGISAFA…HGEGWLLVLR (83 aa)). At K65 the chain carries N6-lipoyllysine.

This sequence belongs to the GcvH family. As to quaternary structure, the glycine cleavage system is composed of four proteins: P, T, L and H. It depends on (R)-lipoate as a cofactor.

The glycine cleavage system catalyzes the degradation of glycine. The H protein shuttles the methylamine group of glycine from the P protein to the T protein. The polypeptide is Glycine cleavage system H protein (Synechococcus sp. (strain CC9605)).